The sequence spans 91 residues: Probable Fe(2+)-trafficking protein (91 aa).

Belongs to the Fe(2+)-trafficking protein family. Monomer.

Could be a mediator in iron transactions between iron acquisition and iron-requiring processes, such as synthesis and/or repair of Fe-S clusters in biosynthetic enzymes. This chain is Probable Fe(2+)-trafficking protein, found in Cronobacter sakazakii (strain ATCC BAA-894) (Enterobacter sakazakii).